The following is a 157-amino-acid chain: Protein-export protein SecB (157 aa).

The protein belongs to the SecB family. As to quaternary structure, homotetramer, a dimer of dimers. One homotetramer interacts with 1 SecA dimer.

The protein localises to the cytoplasm. In terms of biological role, one of the proteins required for the normal export of preproteins out of the cell cytoplasm. It is a molecular chaperone that binds to a subset of precursor proteins, maintaining them in a translocation-competent state. It also specifically binds to its receptor SecA. The polypeptide is Protein-export protein SecB (Photobacterium profundum (strain SS9)).